A 204-amino-acid chain; its full sequence is Protein GrpE (204 aa).

The interval 1–52 (MSSKNNPESETKAKNKWEKVMEAEEEQEEGGGDGSQEMEPHREGLEFPSREK) is disordered. Basic and acidic residues-rich tracts occupy residues 7–22 (PESETKAKNKWEKVME) and 38–52 (MEPHREGLEFPSREK).

It belongs to the GrpE family. In terms of assembly, homodimer.

The protein localises to the cytoplasm. Its function is as follows. Participates actively in the response to hyperosmotic and heat shock by preventing the aggregation of stress-denatured proteins, in association with DnaK and GrpE. It is the nucleotide exchange factor for DnaK and may function as a thermosensor. Unfolded proteins bind initially to DnaJ; upon interaction with the DnaJ-bound protein, DnaK hydrolyzes its bound ATP, resulting in the formation of a stable complex. GrpE releases ADP from DnaK; ATP binding to DnaK triggers the release of the substrate protein, thus completing the reaction cycle. Several rounds of ATP-dependent interactions between DnaJ, DnaK and GrpE are required for fully efficient folding. This chain is Protein GrpE, found in Coxiella burnetii (strain Dugway 5J108-111).